Here is an 899-residue protein sequence, read N- to C-terminus: Translation initiation factor IF-2 (899 aa).

2 disordered regions span residues 31–227 (KKAE…ATEQ) and 240–310 (VTTS…GFDK). Polar residues-rich tracts occupy residues 36–47 (NVSQTEKQSLLS) and 73–87 (STLS…SKSV). Composition is skewed to basic and acidic residues over residues 101–173 (SALE…EKAK), 181–219 (AKSE…ETNE), and 247–261 (RAAE…ETTG). Positions 296-308 (PQVNAPTSMQQGF) are enriched in polar residues. In terms of domain architecture, tr-type G spans 398-565 (SRAPVVTIMG…AILLQSEILE (168 aa)). The tract at residues 407 to 414 (GHVDHGKT) is G1. Residue 407 to 414 (GHVDHGKT) coordinates GTP. Positions 432–436 (GITQH) are G2. The interval 453-456 (DTPG) is G3. GTP is bound by residues 453 to 457 (DTPGH) and 507 to 510 (NKID). The G4 stretch occupies residues 507-510 (NKID). The G5 stretch occupies residues 543–545 (SAK).

Belongs to the TRAFAC class translation factor GTPase superfamily. Classic translation factor GTPase family. IF-2 subfamily.

It localises to the cytoplasm. Functionally, one of the essential components for the initiation of protein synthesis. Protects formylmethionyl-tRNA from spontaneous hydrolysis and promotes its binding to the 30S ribosomal subunits. Also involved in the hydrolysis of GTP during the formation of the 70S ribosomal complex. In Photobacterium profundum (strain SS9), this protein is Translation initiation factor IF-2.